Consider the following 457-residue polypeptide: Cysteine--tRNA ligase (457 aa).

Zn(2+) is bound at residue Cys-28. A 'HIGH' region motif is present at residues 30–40 (MTVYDLCHIGH). Positions 209, 234, and 238 each coordinate Zn(2+). A 'KMSKS' region motif is present at residues 266 to 270 (KMSKS). Lys-269 is a binding site for ATP.

It belongs to the class-I aminoacyl-tRNA synthetase family. As to quaternary structure, monomer. Zn(2+) is required as a cofactor.

It localises to the cytoplasm. The catalysed reaction is tRNA(Cys) + L-cysteine + ATP = L-cysteinyl-tRNA(Cys) + AMP + diphosphate. The sequence is that of Cysteine--tRNA ligase from Chromobacterium violaceum (strain ATCC 12472 / DSM 30191 / JCM 1249 / CCUG 213 / NBRC 12614 / NCIMB 9131 / NCTC 9757 / MK).